We begin with the raw amino-acid sequence, 387 residues long: ATP phosphoribosyltransferase regulatory subunit (387 aa).

The protein belongs to the class-II aminoacyl-tRNA synthetase family. HisZ subfamily. As to quaternary structure, heteromultimer composed of HisG and HisZ subunits.

The protein resides in the cytoplasm. Its pathway is amino-acid biosynthesis; L-histidine biosynthesis; L-histidine from 5-phospho-alpha-D-ribose 1-diphosphate: step 1/9. Its function is as follows. Required for the first step of histidine biosynthesis. May allow the feedback regulation of ATP phosphoribosyltransferase activity by histidine. This Psychrobacter cryohalolentis (strain ATCC BAA-1226 / DSM 17306 / VKM B-2378 / K5) protein is ATP phosphoribosyltransferase regulatory subunit.